A 334-amino-acid chain; its full sequence is Petrobactin import system permease protein FatD (334 aa).

Transmembrane regions (helical) follow at residues 24-44 (FIIAIIVVIILGIISLFTGVY), 64-84 (TVALMLTGAAMAMAGLVMQLI), 98-118 (IEWSSLGLLFVYLLFPAPTLV), 119-139 (QRMTGAIIFSFIGTMIFFLFL), 152-172 (IIGLMLGAVISAVSTFLGLLF), 197-217 (LWLIVIVTLLIFMYANRLTLA), 234-254 (IVLFGTALISVAVGIVAAVIG), 277-297 (SNLPWVCVIGMGTITACDIIS), and 304-324 (FELPVSLILASVGAVVFITIL).

It belongs to the binding-protein-dependent transport system permease family. FecCD subfamily. As to quaternary structure, the complex is composed of two ATP-binding proteins (FatE), two transmembrane proteins (FatC and FatD) and a solute-binding protein (FpuA).

It is found in the cell membrane. Its function is as follows. Part of an ABC transporter complex involved in ferric-petrobactin uptake. Probably responsible for the translocation of the substrate across the membrane. This is Petrobactin import system permease protein FatD from Bacillus anthracis.